We begin with the raw amino-acid sequence, 182 residues long: MEKFKEIMDANQMRRALVRISHEILEKNKGVENLCLVGIQRRGVTLAKRIQENIEMIEGVKLPLGILDITFYRDDLSLLSEHPTVNSTRIDFDINNKKIVLVDDVIFTGRTVRAAIEALMDMGRPKMIQFAVLIDRGHRELPIRADYVGKNVPTSRKEIVHVLVDEFDNDNRVIIEQLDREI.

The PRPP-binding signature appears at 99 to 111 (IVLVDDVIFTGRT).

This sequence belongs to the purine/pyrimidine phosphoribosyltransferase family. PyrR subfamily. In terms of assembly, homodimer and homohexamer; in equilibrium.

It carries out the reaction UMP + diphosphate = 5-phospho-alpha-D-ribose 1-diphosphate + uracil. Functionally, regulates transcriptional attenuation of the pyrimidine nucleotide (pyr) operon by binding in a uridine-dependent manner to specific sites on pyr mRNA. This disrupts an antiterminator hairpin in the RNA and favors formation of a downstream transcription terminator, leading to a reduced expression of downstream genes. In terms of biological role, also displays a weak uracil phosphoribosyltransferase activity which is not physiologically significant. The sequence is that of Bifunctional protein PyrR from Caldicellulosiruptor saccharolyticus (strain ATCC 43494 / DSM 8903 / Tp8T 6331).